We begin with the raw amino-acid sequence, 73 residues long: Beta-defensin 50 (73 aa).

The N-terminal stretch at 1–23 (MKTLHLLLLISGLLSVFVKGVGS) is a signal peptide. 2 disulfide bridges follow: Cys34–Cys63 and Cys46–Cys64.

Belongs to the beta-defensin family.

It is found in the secreted. Its function is as follows. Has bactericidal activity. The sequence is that of Beta-defensin 50 (Defb50) from Rattus norvegicus (Rat).